Here is a 556-residue protein sequence, read N- to C-terminus: 5-aminolevulinate synthase, mitochondrial (556 aa).

The N-terminal 46 residues, 1-46 (MDSLARQSAKICPFVSRVTSSMQQVQVLHKTNMSAMAQQCPVMRRA), are a transit peptide targeting the mitochondrion. Positions 105, 218, and 237 each coordinate substrate. The pyridoxal 5'-phosphate site is built by S270, H298, and T342. K345 is a catalytic residue. An N6-(pyridoxal phosphate)lysine modification is found at K345. Pyridoxal 5'-phosphate-binding residues include T374 and S375. T460 contributes to the substrate binding site.

The protein belongs to the class-II pyridoxal-phosphate-dependent aminotransferase family. In terms of assembly, homodimer. It depends on pyridoxal 5'-phosphate as a cofactor.

It is found in the mitochondrion matrix. It catalyses the reaction succinyl-CoA + glycine + H(+) = 5-aminolevulinate + CO2 + CoA. It functions in the pathway porphyrin-containing compound metabolism; protoporphyrin-IX biosynthesis; 5-aminolevulinate from glycine: step 1/1. Functionally, catalyzes the synthesis of 5-aminolevulinate (ALA) from succinyl-CoA and glycine, the first and rate-limiting step in heme biosynthesis. The sequence is that of 5-aminolevulinate synthase, mitochondrial (HEM1) from Eremothecium gossypii (strain ATCC 10895 / CBS 109.51 / FGSC 9923 / NRRL Y-1056) (Yeast).